The following is a 365-amino-acid chain: Deoxyribonuclease-2-alpha (365 aa).

The N-terminal stretch at M1–T19 is a signal peptide. A disulfide bridge connects residues C22 and C162. N-linked (GlcNAc...) asparagine glycosylation is found at N215, N269, and N293. 2 disulfide bridges follow: C270–C348 and C311–C330. H298 is a catalytic residue.

It belongs to the DNase II family.

The protein resides in the lysosome. It catalyses the reaction Endonucleolytic cleavage to nucleoside 3'-phosphates and 3'-phosphooligonucleotide end-products.. Hydrolyzes DNA under acidic conditions with a preference for double-stranded DNA. Plays a major role in the clearance of nucleic acids generated through apoptosis, hence preventing autoinflammation. Necessary for proper fetal development and for definitive erythropoiesis in fetal liver and bone marrow, where it degrades nuclear DNA expelled from erythroid precursor cells. This Bos taurus (Bovine) protein is Deoxyribonuclease-2-alpha (DNASE2).